The following is a 158-amino-acid chain: Transcription elongation factor GreA (158 aa).

Residues 48–74 are a coiled coil; the sequence is EYDAAKNRQGFIEGRIKELNDKIARAE.

Belongs to the GreA/GreB family.

Functionally, necessary for efficient RNA polymerase transcription elongation past template-encoded arresting sites. The arresting sites in DNA have the property of trapping a certain fraction of elongating RNA polymerases that pass through, resulting in locked ternary complexes. Cleavage of the nascent transcript by cleavage factors such as GreA or GreB allows the resumption of elongation from the new 3'terminus. GreA releases sequences of 2 to 3 nucleotides. The polypeptide is Transcription elongation factor GreA (Syntrophotalea carbinolica (strain DSM 2380 / NBRC 103641 / GraBd1) (Pelobacter carbinolicus)).